The chain runs to 315 residues: Ribonuclease Z (315 aa).

Positions 61, 63, 65, 66, 151, 219, and 278 each coordinate Zn(2+). The Proton acceptor role is filled by D65.

Belongs to the RNase Z family. Homodimer. The cofactor is Zn(2+).

The enzyme catalyses Endonucleolytic cleavage of RNA, removing extra 3' nucleotides from tRNA precursor, generating 3' termini of tRNAs. A 3'-hydroxy group is left at the tRNA terminus and a 5'-phosphoryl group is left at the trailer molecule.. Its function is as follows. Zinc phosphodiesterase, which displays some tRNA 3'-processing endonuclease activity. Probably involved in tRNA maturation, by removing a 3'-trailer from precursor tRNA. The protein is Ribonuclease Z of Clostridium botulinum (strain Eklund 17B / Type B).